The chain runs to 75 residues: UPF0346 protein OB1736 (75 aa).

It belongs to the UPF0346 family.

This chain is UPF0346 protein OB1736, found in Oceanobacillus iheyensis (strain DSM 14371 / CIP 107618 / JCM 11309 / KCTC 3954 / HTE831).